Consider the following 250-residue polypeptide: NAD-dependent protein deacetylase (250 aa).

The 244-residue stretch at 1–244 (MECDKVGDLL…PCVVDYIKSQ (244 aa)) folds into the Deacetylase sirtuin-type domain. 8 residues coordinate NAD(+): alanine 22, threonine 26, phenylalanine 33, arginine 34, glutamine 98, isoleucine 100, aspartate 101, and histidine 116. Position 33 (phenylalanine 33) interacts with nicotinamide. Nicotinamide contacts are provided by isoleucine 100 and aspartate 101. The Proton acceptor role is filled by histidine 116. 4 residues coordinate Zn(2+): cysteine 124, cysteine 127, cysteine 149, and cysteine 151. The NAD(+) site is built by serine 187, serine 188, asparagine 212, and valine 230.

It belongs to the sirtuin family. Class U subfamily. Zn(2+) is required as a cofactor.

Its subcellular location is the cytoplasm. The enzyme catalyses N(6)-acetyl-L-lysyl-[protein] + NAD(+) + H2O = 2''-O-acetyl-ADP-D-ribose + nicotinamide + L-lysyl-[protein]. NAD-dependent protein deacetylase which modulates the activities of several enzymes which are inactive in their acetylated form. Deacetylates the N-terminal lysine residue of Alba, the major archaeal chromatin protein and that, in turn, increases Alba's DNA binding affinity, thereby repressing transcription. This is NAD-dependent protein deacetylase from Sulfurisphaera tokodaii (strain DSM 16993 / JCM 10545 / NBRC 100140 / 7) (Sulfolobus tokodaii).